A 3414-amino-acid chain; its full sequence is Genome polyprotein (3414 aa).

The segment at 1 to 30 (MVKKAILKGKGGGPPRRVSKETATKTRQPR) is disordered. Residues 2–98 (VKKAILKGKG…LQKRGKRRSA (97 aa)) are Cytoplasmic-facing. The propeptide at 97-117 (SATDWMSWLLVITLLGMTLAA) is ER anchor for the capsid protein C, removed in mature form by serine protease NS3. The helical transmembrane segment at 99–119 (TDWMSWLLVITLLGMTLAATV) threads the bilayer. Over 120–242 (RKERDGSTVI…HLTRVEGWVW (123 aa)) the chain is Extracellular. The N-linked (GlcNAc...) asparagine; by host glycan is linked to N144. Residues 243–260 (KNKLLALAMVTVVWLTLE) form a helical membrane-spanning segment. S261 is a topological domain (cytoplasmic). The helical transmembrane segment at 262-280 (VVTRVAVLVVLLCLAPVYA) threads the bilayer. The Extracellular segment spans residues 281–727 (SRCTHLENRD…HTVLGGAFNS (447 aa)). 6 disulfides stabilise this stretch: C283/C310, C340/C396, C340/C401, C354/C385, C372/C396, and C372/C401. Residues 378 to 391 (DRGWGNHCGLFGKG) are fusion peptide. N-linked (GlcNAc...) asparagine; by host glycosylation occurs at N434. 2 disulfides stabilise this stretch: C466-C570 and C587-C618. The chain crosses the membrane as a helical span at residues 728-748 (IFGGVGFLPKLLLGVALAWLG). At 749–755 (LNMRNPT) the chain is on the extracellular side. A helical transmembrane segment spans residues 756–776 (MSMSFLLAGGLVLAMTLGVGA). Residues 777–1132 (DVGCAVDTER…RSMVVADNGE (356 aa)) are Extracellular-facing. Intrachain disulfides connect C780-C791, C831-C920, C955-C1000, C1057-C1106, C1068-C1090, and C1089-C1093. N861, N983, and N999 each carry an N-linked (GlcNAc...) asparagine; by host glycan. The helical transmembrane segment at 1133–1153 (LLSEGGVPGIVALFVVLEYII) threads the bilayer. Over 1154–1158 (RRRPS) the chain is Cytoplasmic. A helical transmembrane segment spans residues 1159-1179 (TGTTVVWGGIVVLALLVTGMV). At 1180-1187 (RIESLVRY) the chain is on the lumenal side. The helical transmembrane segment at 1188–1208 (VVAVGITFHLELGPEIVALML) threads the bilayer. Residues 1209-1293 (LQAVFELRVG…LLMALMTQQD (85 aa)) are Cytoplasmic-facing. A helical membrane pass occupies residues 1294-1314 (VVTVHHGLVCFLSVASACSVW). The Lumenal segment spans residues 1315 to 1327 (RLLKGHREQKGLT). The chain crosses the membrane as a helical span at residues 1328–1348 (WVVPLAGLLGGEGSGIRLLAF). Residues 1349–1359 (WELSAHRGRRS) lie on the Cytoplasmic side of the membrane. The chain crosses the membrane as a helical span at residues 1360–1378 (FSEPLTVVGVMLTLASGMM). Over 1379-1382 (RHTS) the chain is Lumenal. A helical membrane pass occupies residues 1383–1403 (QEALCALAVASFLLLMLVLGT). Over 1404 to 1454 (RKMQLVAEWSGCVEWYPELVNEGGEVSLRVRQDAMGNFHLTELEKEERMMA) the chain is Cytoplasmic. The interacts with and activates NS3 protease stretch occupies residues 1410–1449 (AEWSGCVEWYPELVNEGGEVSLRVRQDAMGNFHLTELEKE). The segment at residues 1455–1475 (FWLIAGLAASAIHWSGILGVM) is an intramembrane region (helical). The Cytoplasmic segment spans residues 1476–2160 (GLWTLTEMLR…RMAERDAPEA (685 aa)). The 180-residue stretch at 1490 to 1669 (SDLVFSGQGG…EAEKSRPNLP (180 aa)) folds into the Peptidase S7 domain. Active-site charge relay system; for serine protease NS3 activity residues include H1543, D1567, and S1627. Residues 1675 to 1831 (TGWTSKGQIT…ESNGAITSEE (157 aa)) form the Helicase ATP-binding domain. 1688-1695 (MHPGSGKT) contributes to the ATP binding site. A DEAH box motif is present at residues 1779 to 1782 (DEAH). Positions 1841–2000 (DGFDWITEYE…TLRGPVATFY (160 aa)) constitute a Helicase C-terminal domain. K1883 carries the N6-acetyllysine; by host modification. A helical membrane pass occupies residues 2161–2181 (FLTMVEMMVLGLATLGVIWCF). The Lumenal portion of the chain corresponds to 2182 to 2189 (VVRTSISR). Residues 2190-2210 (MMLGTLVLLASLLLLWAGGVG) constitute an intramembrane region (helical). Y2211 is a topological domain (lumenal). The chain crosses the membrane as a helical span at residues 2212–2232 (GNMAGVALIFYTLLTVLQPEA). Residues 2233–2244 (GKQRSSDDNKLA) are Cytoplasmic-facing. A helical membrane pass occupies residues 2245–2265 (YFLLTLCSLAGLVAANEMGFL). Over 2266-2299 (EKTKADLSTALWSEREEPRPWSEWTNVDIQPARS) the chain is Lumenal. Positions 2300–2320 (WGTYVLVVSLFTPYIIHQLQT) form an intramembrane region, helical. The Lumenal portion of the chain corresponds to 2321–2343 (KIQQLVNSAVASGAQAMRDLGGG). The segment at residues 2344 to 2364 (APFFGVAGHVMTLGVVSLIGA) is an intramembrane region (helical). Residues 2365–2368 (TPTS) lie on the Lumenal side of the membrane. Residues 2369–2389 (LMVGVGLAALHLAIVVSGLEA) traverse the membrane as a helical segment. Over 2390 to 2432 (ELTQRAHKVFFSAMVRNPMVDGDVINPFGEGEAKPALYERKMS) the chain is Cytoplasmic. Residues 2433-2453 (LVLATVLCLMSVVMNRTVASI) form a helical membrane-spanning segment. Residues 2454 to 2477 (TEASAVGLAAAGQLLRPEADTLWT) are Lumenal-facing. The chain crosses the membrane as a helical span at residues 2478–2498 (MPVACGMSGVVRGSLWGFLPL). At 2499-3414 (GHRLWLRASG…WELRLESSII (916 aa)) the chain is on the cytoplasmic side. The region spanning 2512–2776 (GGSEGDTLGD…ELDLGVGTRC (265 aa)) is the mRNA cap 0-1 NS5-type MT domain. An S-adenosyl-L-methionine-binding site is contributed by S2567. S2567 carries the phosphoserine modification. K2572 serves as the catalytic For 2'-O-MTase activity. Residues G2597, W2598, T2615, I2616, D2642, and V2643 each contribute to the S-adenosyl-L-methionine site. Catalysis depends on D2657, which acts as the For 2'-O-MTase activity. I2658 is a binding site for S-adenosyl-L-methionine. Active-site for 2'-O-MTase activity residues include K2694 and E2730. The tract at residues 2730-2734 (EMYYS) is interaction with host SCRIB. Y2732 contributes to the S-adenosyl-L-methionine binding site. The Zn(2+) site is built by E2950, H2954, C2959, and C2962. The region spanning 3040–3189 (GLFYADDTAG…RPLDDRFGKA (150 aa)) is the RdRp catalytic domain. Residues H3224, C3240, and C3359 each coordinate Zn(2+).

In the N-terminal section; belongs to the class I-like SAM-binding methyltransferase superfamily. mRNA cap 0-1 NS5-type methyltransferase family. As to quaternary structure, homodimer. Interacts (via N-terminus) with host EXOC1 (via C-terminus); this interaction results in EXOC1 degradation through the proteasome degradation pathway. In terms of assembly, forms heterodimers with envelope protein E in the endoplasmic reticulum and Golgi. Homodimer; in the endoplasmic reticulum and Golgi. Interacts with protein prM. Interacts with non-structural protein 1. As to quaternary structure, homodimer; Homohexamer when secreted. Interacts with envelope protein E. In terms of assembly, interacts (via N-terminus) with serine protease NS3. Forms a heterodimer with serine protease NS3. May form homooligomers. As to quaternary structure, forms a heterodimer with NS2B. Interacts with NS4B. Interacts with unphosphorylated RNA-directed RNA polymerase NS5; this interaction stimulates RNA-directed RNA polymerase NS5 guanylyltransferase activity. In terms of assembly, interacts with serine protease NS3. Interacts with NS1. Homodimer. Interacts with host STAT2; this interaction inhibits the phosphorylation of the latter, and, when all viral proteins are present (polyprotein), targets STAT2 for degradation. Interacts with serine protease NS3. Interacts with host SCRIB; this interaction targets NS5 to the cell membrane periphery and nucleus, thereby allowing efficient host nuclear STAT1 inhibition. Post-translationally, specific enzymatic cleavages in vivo yield mature proteins. Cleavages in the lumen of endoplasmic reticulum are performed by host signal peptidase, whereas cleavages in the cytoplasmic side are performed by serine protease NS3. Signal cleavage at the 2K-4B site requires a prior NS3 protease-mediated cleavage at the 4A-2K site. Cleaved in post-Golgi vesicles by a host furin, releasing the mature small envelope protein M, and peptide pr. This cleavage is incomplete as up to 30% of viral particles still carry uncleaved prM. In terms of processing, N-glycosylated. Post-translationally, N-glycosylated. The excreted form is glycosylated and this is required for efficient secretion of the protein from infected cells. Acetylated by host KAT5. Acetylation modulates NS3 RNA-binding and unwinding activities and plays an important positive role for viral replication. In terms of processing, phosphorylated on serines residues. This phosphorylation may trigger NS5 nuclear localization.

The protein localises to the virion. It is found in the host nucleus. The protein resides in the host cytoplasm. Its subcellular location is the host perinuclear region. It localises to the secreted. The protein localises to the virion membrane. It is found in the host endoplasmic reticulum membrane. It catalyses the reaction Selective hydrolysis of -Xaa-Xaa-|-Yaa- bonds in which each of the Xaa can be either Arg or Lys and Yaa can be either Ser or Ala.. The catalysed reaction is RNA(n) + a ribonucleoside 5'-triphosphate = RNA(n+1) + diphosphate. It carries out the reaction a ribonucleoside 5'-triphosphate + H2O = a ribonucleoside 5'-diphosphate + phosphate + H(+). The enzyme catalyses ATP + H2O = ADP + phosphate + H(+). It catalyses the reaction a 5'-end (5'-triphosphoguanosine)-ribonucleoside in mRNA + S-adenosyl-L-methionine = a 5'-end (N(7)-methyl 5'-triphosphoguanosine)-ribonucleoside in mRNA + S-adenosyl-L-homocysteine. The catalysed reaction is a 5'-end (N(7)-methyl 5'-triphosphoguanosine)-ribonucleoside in mRNA + S-adenosyl-L-methionine = a 5'-end (N(7)-methyl 5'-triphosphoguanosine)-(2'-O-methyl-ribonucleoside) in mRNA + S-adenosyl-L-homocysteine + H(+). In terms of biological role, plays a role in virus budding by binding to the cell membrane and gathering the viral RNA into a nucleocapsid that forms the core of a mature virus particle. During virus entry, may induce genome penetration into the host cytoplasm after hemifusion induced by the surface proteins. Can migrate to the cell nucleus where it modulates host functions. Its function is as follows. Inhibits RNA silencing by interfering with host Dicer. Prevents premature fusion activity of envelope proteins in trans-Golgi by binding to envelope protein E at pH6.0. After virion release in extracellular space, gets dissociated from E dimers. Functionally, acts as a chaperone for envelope protein E during intracellular virion assembly by masking and inactivating envelope protein E fusion peptide. prM is the only viral peptide matured by host furin in the trans-Golgi network probably to avoid catastrophic activation of the viral fusion activity in acidic Golgi compartment prior to virion release. prM-E cleavage is inefficient, and many virions are only partially matured. These uncleaved prM would play a role in immune evasion. In terms of biological role, may play a role in virus budding. Exerts cytotoxic effects by activating a mitochondrial apoptotic pathway through M ectodomain. May display a viroporin activity. Its function is as follows. Binds to host cell surface receptor and mediates fusion between viral and cellular membranes. Envelope protein is synthesized in the endoplasmic reticulum in the form of heterodimer with protein prM. They play a role in virion budding in the ER, and the newly formed immature particle is covered with 60 spikes composed of heterodimer between precursor prM and envelope protein E. The virion is transported to the Golgi apparatus where the low pH causes dissociation of PrM-E heterodimers and formation of E homodimers. prM-E cleavage is inefficient, and many virions are only partially matured. These uncleaved prM would play a role in immune evasion. Involved in immune evasion, pathogenesis and viral replication. Once cleaved off the polyprotein, is targeted to three destinations: the viral replication cycle, the plasma membrane and the extracellular compartment. Essential for viral replication. Required for formation of the replication complex and recruitment of other non-structural proteins to the ER-derived membrane structures. Excreted as a hexameric lipoparticle that plays a role against host immune response. Antagonizing the complement function. Binds to the host macrophages and dendritic cells. Inhibits signal transduction originating from Toll-like receptor 3 (TLR3). Functionally, component of the viral RNA replication complex that functions in virion assembly and antagonizes the host immune response. In terms of biological role, required cofactor for the serine protease function of NS3. May have membrane-destabilizing activity and form viroporins. Its function is as follows. Displays three enzymatic activities: serine protease, NTPase and RNA helicase. NS3 serine protease, in association with NS2B, performs its autocleavage and cleaves the polyprotein at dibasic sites in the cytoplasm: C-prM, NS2A-NS2B, NS2B-NS3, NS3-NS4A, NS4A-2K and NS4B-NS5. NS3 RNA helicase binds RNA and unwinds dsRNA in the 3' to 5' direction. Regulates the ATPase activity of the NS3 helicase activity. NS4A allows NS3 helicase to conserve energy during unwinding. Functionally, functions as a signal peptide for NS4B and is required for the interferon antagonism activity of the latter. In terms of biological role, induces the formation of ER-derived membrane vesicles where the viral replication takes place. Inhibits interferon (IFN)-induced host STAT1 phosphorylation and nuclear translocation, thereby preventing the establishment of cellular antiviral state by blocking the IFN-alpha/beta pathway. Inhibits STAT2 translocation in the nucleus after IFN-alpha treatment. Its function is as follows. Replicates the viral (+) and (-) genome, and performs the capping of genomes in the cytoplasm. NS5 methylates viral RNA cap at guanine N-7 and ribose 2'-O positions. Besides its role in RNA genome replication, also prevents the establishment of cellular antiviral state by blocking the interferon-alpha/beta (IFN-alpha/beta) signaling pathway. Inhibits host TYK2 and STAT2 phosphorylation, thereby preventing activation of JAK-STAT signaling pathway. The polypeptide is Genome polyprotein (Tick-borne encephalitis virus European subtype (strain Neudoerfl) (NEUV)).